Reading from the N-terminus, the 604-residue chain is Elongation factor 4 (604 aa).

The 183-residue stretch at 8–190 folds into the tr-type G domain; the sequence is KNKRNFSIIA…AIVHRIPAPN (183 aa). GTP-binding positions include 20-25 and 137-140; these read DHGKST and NKID.

The protein belongs to the TRAFAC class translation factor GTPase superfamily. Classic translation factor GTPase family. LepA subfamily.

The protein localises to the cell inner membrane. It carries out the reaction GTP + H2O = GDP + phosphate + H(+). Required for accurate and efficient protein synthesis under certain stress conditions. May act as a fidelity factor of the translation reaction, by catalyzing a one-codon backward translocation of tRNAs on improperly translocated ribosomes. Back-translocation proceeds from a post-translocation (POST) complex to a pre-translocation (PRE) complex, thus giving elongation factor G a second chance to translocate the tRNAs correctly. Binds to ribosomes in a GTP-dependent manner. The sequence is that of Elongation factor 4 from Fusobacterium nucleatum subsp. nucleatum (strain ATCC 25586 / DSM 15643 / BCRC 10681 / CIP 101130 / JCM 8532 / KCTC 2640 / LMG 13131 / VPI 4355).